The following is a 206-amino-acid chain: Sortase A (206 aa).

The Cytoplasmic portion of the chain corresponds to 1–6 (MKKWTN). A helical transmembrane segment spans residues 7-24 (RLMTIAGVVLILVAAYLF). Residues 25–206 (AKPHIDNYLH…RKIFVATEVK (182 aa)) lie on the Extracellular side of the membrane. The disordered stretch occupies residues 49-69 (VKEQASKDKKQQAKPQIPKDK). Glutamate 105, glutamate 108, aspartate 112, and asparagine 114 together coordinate Ca(2+). The active-site Proton donor/acceptor is histidine 120. Glutamate 171 provides a ligand contact to Ca(2+). The Acyl-thioester intermediate role is filled by cysteine 184.

This sequence belongs to the bacterial sortase family. Class A subfamily. Monomer and homodimer; in equilibrium.

The protein localises to the cell membrane. The catalysed reaction is The enzyme catalyzes a cell wall sorting reaction in which a surface protein with a sorting signal containing a LPXTG motif is cleaved between the Thr and Gly residue. The resulting threonine carboxyl end of the protein is covalently attached to a pentaglycine cross-bridge of peptidoglycan.. Its activity is regulated as follows. Sortase activity is regulated by monomer-homodimer equilibrium. Mutant cells with monomeric SrtA display more adhesive proteins on the cell surface and are more invasive than wild-type cells, which have majority of SrtA in dimeric form. Dimerization may suppress the enzymatic activity on cell membranes. Stimulated by calcium ions, which promote substrate binding. Calcium ions bind to SrtA and modulate both the structure and dynamics of a large active site loop. Can also be stimulated, to a lesser extent, by Mg(2+) and Mn(2+). Inhibited by sulfhydryl-modifying reagents. Its function is as follows. Transpeptidase that anchors surface proteins to the cell wall. Recognizes and modifies its substrate by proteolytic cleavage of a C-terminal sorting signal. Following cleavage, a covalent intermediate is formed via a thioester bond between the sortase and its substrate, which is then transferred and covalently attached to the cell wall. This sortase recognizes a Leu-Pro-x-Thr-Gly (LPXTG) motif, which is cleaved by the sortase between the threonine and glycine residues. Utilizes lipid II as the peptidoglycan substrate for the sorting reaction. Responsible for the display of important virulence factors. Important for interactions with the host and host colonization during infection. This chain is Sortase A, found in Staphylococcus aureus (strain NCTC 8325 / PS 47).